The chain runs to 749 residues: Dynamin-1-like protein (749 aa).

Methionine 1 carries the N-acetylmethionine modification. One can recognise a Dynamin-type G domain in the interval 22–315; that stretch reads IIQLPQIVVV…LMHHIRDCLP (294 aa). Positions 32 to 39 are G1 motif; sequence GTQSSGKS. 32–40 contributes to the GTP binding site; sequence GTQSSGKSS. The segment at 58–60 is G2 motif; sequence VTR. Residues 74–93 are disordered; the sequence is DKRKTTGEENDPATWKNSRH. Positions 159–162 are G3 motif; that stretch reads DLPG. The G4 motif stretch occupies residues 228–231; it reads TKLD. GTP-binding positions include 228–234 and 259–262; these read TKLDLMD and NRSQ. A G5 motif region spans residues 258-261; it reads VNRS. The interval 357–502 is middle domain; the sequence is YCNTIEGTAK…NEMVHNLVAI (146 aa). An interaction with GSK3B region spans residues 461-698; sequence NYSTQELLRF…NHVKDTLQSE (238 aa). The tract at residues 515–582 is b domain; sequence ADACGLMNNN…IQESRRETKN (68 aa). Residues 536-604 are disordered; sequence ELPSAVSRDK…QEPTTGNWRG (69 aa). Serine 542 is modified (phosphoserine). Residues lysine 545 and lysine 548 each participate in a glycyl lysine isopeptide (Lys-Gly) (interchain with G-Cter in SUMO) cross-link. Positions 550-567 are enriched in low complexity; sequence PSALAPASQEPSPAASAE. A Phosphoserine modification is found at serine 561. Residues 568-581 show a composition bias toward basic and acidic residues; sequence ADGKLIQESRRETK. Residues lysine 571 and lysine 581 each participate in a glycyl lysine isopeptide (Lys-Gly) (interchain with G-Cter in SUMO) cross-link. O-linked (GlcNAc) threonine glycans are attached at residues threonine 598 and threonine 599. A Glycyl lysine isopeptide (Lys-Gly) (interchain with G-Cter in SUMO) cross-link involves residue lysine 607. Position 610 is an N6-acetyllysine; alternate (lysine 610). Lysine 610 participates in a covalent cross-link: Glycyl lysine isopeptide (Lys-Gly) (interchain with G-Cter in SUMO); alternate. Lysine 619 is covalently cross-linked (Glycyl lysine isopeptide (Lys-Gly) (interchain with G-Cter in SUMO)). Serine 620 is subject to Phosphoserine. A Glycyl lysine isopeptide (Lys-Gly) (interchain with G-Cter in SUMO) cross-link involves residue lysine 621. Serine 629 bears the Phosphoserine; by CDK1 and PINK1 mark. A Phosphoserine; by CAMK1 and PKA modification is found at serine 650. Cysteine 657 bears the S-nitrosocysteine mark. The 92-residue stretch at 657–748 folds into the GED domain; sequence CEVIERLIKS…IIAEIRETHL (92 aa). Positions 667–681 are important for homodimerization; that stretch reads YFLIVRKNIQDSVPK.

The protein belongs to the TRAFAC class dynamin-like GTPase superfamily. Dynamin/Fzo/YdjA family. As to quaternary structure, homotetramer; dimerizes through the N-terminal GTP-middle region of one molecule binding to the GED domain of another DNM1L molecule. Oligomerizes in a GTP-dependent manner to form membrane-associated tubules with a spiral pattern. Interacts with GSK3B and MARCHF5. Interacts (via the GTPase and B domains) with UBE2I; the interaction promotes sumoylation of DNM1L, mainly in its B domain. Interacts with PPP3CA; the interaction dephosphorylates DNM1L and regulates its transition to mitochondria. Interacts with BCL2L1 isoform BCL-X(L) and CLTA; DNM1L and BCL2L1 isoform BCL-X(L) may form a complex in synaptic vesicles that also contains clathrin and MFF. Interacts with MFF; the interaction is inhinited by C11orf65/MFI. Interacts with FIS1. Interacts with MIEF2 and MIEF1; GTP-dependent, regulates GTP hydrolysis and DNM1L oligomerization. Interacts with PGAM5; this interaction leads to dephosphorylation at Ser-656 and activation of GTPase activity and eventually to mitochondria fragmentation. Interacts with RALBP1; during mitosis, recruits DNM1L to the mitochondrion and mediates its activation by the mitotic kinase cyclin B-CDK1. Post-translationally, phosphorylation/dephosphorylation events on two sites near the GED domain regulate mitochondrial fission. Phosphorylation on Ser-650 by CAMK1 and PKA inhibits the GTPase activity, leading to a defect in mitochondrial fission promoting mitochondrial elongation. Dephosphorylated on this site by PPP3CA which promotes mitochondrial fission. Phosphorylation on Ser-629 by CDK1 and PINK1 activates the GTPase activity and promotes mitochondrial fission. Phosphorylated in a circadian manner at Ser-650. Sumoylated on various lysine residues within the B domain, probably by MUL1. Sumoylation positively regulates mitochondrial fission. Desumoylated by SENP5 during G2/M transition of mitosis. Appears to be linked to its catalytic activity. In terms of processing, S-nitrosylation increases DNM1L dimerization, mitochondrial fission and causes neuronal damage. Post-translationally, O-GlcNAcylation augments the level of the GTP-bound active form of DNM1L and induces translocation from the cytoplasm to mitochondria in cardiomyocytes. It also decreases phosphorylation at Ser-650. Ubiquitination by MARCHF5 affects mitochondrial morphology.

The protein localises to the cytoplasm. The protein resides in the cytosol. Its subcellular location is the golgi apparatus. It localises to the endomembrane system. It is found in the mitochondrion outer membrane. The protein localises to the peroxisome. The protein resides in the membrane. Its subcellular location is the clathrin-coated pit. It localises to the cytoplasmic vesicle. It is found in the secretory vesicle. The protein localises to the synaptic vesicle membrane. The enzyme catalyses GTP + H2O = GDP + phosphate + H(+). Its function is as follows. Functions in mitochondrial and peroxisomal division. Mediates membrane fission through oligomerization into membrane-associated tubular structures that wrap around the scission site to constrict and sever the mitochondrial membrane through a GTP hydrolysis-dependent mechanism. The specific recruitment at scission sites is mediated by membrane receptors like MFF, MIEF1 and MIEF2 for mitochondrial membranes. While the recruitment by the membrane receptors is GTP-dependent, the following hydrolysis of GTP induces the dissociation from the receptors and allows DNM1L filaments to curl into closed rings that are probably sufficient to sever a double membrane. Acts downstream of PINK1 to promote mitochondrial fission in a PRKN-dependent manner. Plays an important role in mitochondrial fission during mitosis. Through its function in mitochondrial division, ensures the survival of at least some types of postmitotic neurons, including Purkinje cells, by suppressing oxidative damage. Required for normal brain development, including that of cerebellum. Facilitates developmentally regulated apoptosis during neural tube formation. Required for a normal rate of cytochrome c release and caspase activation during apoptosis; this requirement may depend upon the cell type and the physiological apoptotic cues. Required for formation of endocytic vesicles. Proposed to regulate synaptic vesicle membrane dynamics through association with BCL2L1 isoform Bcl-X(L) which stimulates its GTPase activity in synaptic vesicles; the function may require its recruitment by MFF to clathrin-containing vesicles. Required for programmed necrosis execution. Rhythmic control of its activity following phosphorylation at Ser-650 is essential for the circadian control of mitochondrial ATP production. This chain is Dynamin-1-like protein, found in Bos taurus (Bovine).